Consider the following 1624-residue polypeptide: NAD-specific glutamate dehydrogenase (1624 aa).

Residue K845 is part of the active site.

This sequence belongs to the Glu/Leu/Phe/Val dehydrogenases family. As to quaternary structure, interacts with (unphosphorylated) GarA.

It carries out the reaction L-glutamate + NAD(+) + H2O = 2-oxoglutarate + NH4(+) + NADH + H(+). Activity is inhibited by unphosphorylated GarA. Its function is as follows. Catalyzes the reversible conversion of L-glutamate to 2-oxoglutarate. This Mycobacterium tuberculosis (strain ATCC 25618 / H37Rv) protein is NAD-specific glutamate dehydrogenase (gdh).